The primary structure comprises 428 residues: UDP-N-acetylglucosamine 1-carboxyvinyltransferase (428 aa).

25–26 (KN) is a phosphoenolpyruvate binding site. Residue Arg-102 coordinates UDP-N-acetyl-alpha-D-glucosamine. The active-site Proton donor is the Cys-126. Cys-126 carries the post-translational modification 2-(S-cysteinyl)pyruvic acid O-phosphothioketal. Positions 316 and 338 each coordinate UDP-N-acetyl-alpha-D-glucosamine.

It belongs to the EPSP synthase family. MurA subfamily.

It localises to the cytoplasm. It catalyses the reaction phosphoenolpyruvate + UDP-N-acetyl-alpha-D-glucosamine = UDP-N-acetyl-3-O-(1-carboxyvinyl)-alpha-D-glucosamine + phosphate. Its pathway is cell wall biogenesis; peptidoglycan biosynthesis. Cell wall formation. Adds enolpyruvyl to UDP-N-acetylglucosamine. The protein is UDP-N-acetylglucosamine 1-carboxyvinyltransferase of Anaplasma marginale (strain St. Maries).